A 99-amino-acid chain; its full sequence is Large ribosomal subunit protein eL30 (99 aa).

The protein belongs to the eukaryotic ribosomal protein eL30 family.

This chain is Large ribosomal subunit protein eL30, found in Methanobrevibacter smithii (strain ATCC 35061 / DSM 861 / OCM 144 / PS).